Consider the following 688-residue polypeptide: Zinc finger protein 770 (688 aa).

Residue Lys-11 forms a Glycyl lysine isopeptide (Lys-Gly) (interchain with G-Cter in SUMO2) linkage. C2H2-type zinc fingers lie at residues 27 to 49 (YVCN…YLIH), 55 to 77 (FECD…QLTH), and 81 to 103 (FKCS…QQLH). Residues Lys-112, Lys-121, and Lys-146 each participate in a glycyl lysine isopeptide (Lys-Gly) (interchain with G-Cter in SUMO2) cross-link. 3 consecutive C2H2-type zinc fingers follow at residues 160–182 (HACT…VLIH), 188–210 (FKCV…QLTH), and 216–238 (FQCC…KQIH). Lys-262 participates in a covalent cross-link: Glycyl lysine isopeptide (Lys-Gly) (interchain with G-Cter in SUMO2). Residues 294-318 (FQCPKCEKCFESEQILNEHSCFPAR) form a C2H2-type 7; degenerate zinc finger. Residues Lys-420 and Lys-437 each participate in a glycyl lysine isopeptide (Lys-Gly) (interchain with G-Cter in SUMO2) cross-link. 4 consecutive C2H2-type zinc fingers follow at residues 475–497 (CPCD…YLIH), 503–525 (FGCN…EQTH), 623–645 (YRCS…YLIH), and 651–673 (FECS…QLTH). Residue Lys-681 forms a Glycyl lysine isopeptide (Lys-Gly) (interchain with G-Cter in SUMO2) linkage.

This sequence belongs to the krueppel C2H2-type zinc-finger protein family.

Its subcellular location is the nucleus. Its function is as follows. May be involved in transcriptional regulation. This is Zinc finger protein 770 (ZNF770) from Pongo abelii (Sumatran orangutan).